We begin with the raw amino-acid sequence, 452 residues long: Maltoporin (452 aa).

Positions M1 to A25 are cleaved as a signal peptide.

Belongs to the porin LamB (TC 1.B.3) family. In terms of assembly, homotrimer formed of three 18-stranded antiparallel beta-barrels, containing three independent channels.

Its subcellular location is the cell outer membrane. The enzyme catalyses beta-maltose(in) = beta-maltose(out). Functionally, involved in the transport of maltose and maltodextrins. This is Maltoporin from Salmonella enteritidis PT4 (strain P125109).